The chain runs to 946 residues: Altered inheritance of mitochondria protein 3 (946 aa).

2 disordered regions span residues 1–333 (MGFW…PQMN) and 351–903 (MSST…KSLE). Residues 36–54 (ASKKHYNNSKARRERKSGK) show a composition bias toward basic residues. 3 positions are modified to phosphoserine: Ser-57, Ser-58, and Ser-64. A compositionally biased stretch (acidic residues) spans 59-68 (DEEYESEDEM). Over residues 69–84 (EHERKPTDIRSLKDPK) the composition is skewed to basic and acidic residues. Low complexity-rich tracts occupy residues 93 to 105 (PGQK…QQQQ) and 130 to 158 (QSQY…PPIY). Polar residues predominate over residues 166 to 244 (GSNSNATSYQ…YVSHGSTNLG (79 aa)). Low complexity-rich tracts occupy residues 245-267 (QSQF…VLPS) and 306-320 (QQQQ…QQQQ). The span at 351–364 (MSSTTNMQDSNPSY) shows a compositional bias: polar residues. A compositionally biased stretch (pro residues) spans 376–392 (GGQPPVPVRMQPQPPQP). The segment covering 463–472 (IQPNTTSSAA) has biased composition (polar residues). Ser-473 is modified (phosphoserine). Composition is skewed to basic and acidic residues over residues 485–499 (DNER…DEST), 523–538 (HGLD…KNAS), and 608–625 (EIKD…DRNV). Composition is skewed to low complexity over residues 627–642 (PSLL…SQSQ) and 666–675 (SQSSNSSDSS). Thr-728 carries the post-translational modification Phosphothreonine. The span at 748 to 758 (DSSKDANKYEK) shows a compositional bias: basic and acidic residues. Residues 762 to 773 (PVTSSIQAQQST) show a composition bias toward polar residues. Phosphothreonine is present on Thr-860. Positions 861–878 (PPRPPPSRSSPKKVPPVV) are enriched in pro residues. Basic residues predominate over residues 887 to 898 (KKPPVVPKKKPL).

This sequence belongs to the AIM3 family. As to quaternary structure, interacts with RVS167.

It is found in the membrane raft. The chain is Altered inheritance of mitochondria protein 3 (AIM3) from Saccharomyces cerevisiae (strain Lalvin EC1118 / Prise de mousse) (Baker's yeast).